The following is a 1014-amino-acid chain: Isoleucine--tRNA ligase (1014 aa).

The short motif at 48 to 58 (PTANGRPGIHH) is the 'HIGH' region element. The short motif at 628-632 (KMSKS) is the 'KMSKS' region element. ATP is bound at residue Lys-631.

The protein belongs to the class-I aminoacyl-tRNA synthetase family. IleS type 2 subfamily. As to quaternary structure, monomer. Requires Zn(2+) as cofactor.

It localises to the cytoplasm. The catalysed reaction is tRNA(Ile) + L-isoleucine + ATP = L-isoleucyl-tRNA(Ile) + AMP + diphosphate. Its function is as follows. Catalyzes the attachment of isoleucine to tRNA(Ile). As IleRS can inadvertently accommodate and process structurally similar amino acids such as valine, to avoid such errors it has two additional distinct tRNA(Ile)-dependent editing activities. One activity is designated as 'pretransfer' editing and involves the hydrolysis of activated Val-AMP. The other activity is designated 'posttransfer' editing and involves deacylation of mischarged Val-tRNA(Ile). This chain is Isoleucine--tRNA ligase, found in Dehalococcoides mccartyi (strain ATCC BAA-2266 / KCTC 15142 / 195) (Dehalococcoides ethenogenes (strain 195)).